The following is a 509-amino-acid chain: Glycogen synthase (509 aa).

Lys-47 serves as a coordination point for ADP-alpha-D-glucose.

This sequence belongs to the glycosyltransferase 1 family. Bacterial/plant glycogen synthase subfamily.

The enzyme catalyses [(1-&gt;4)-alpha-D-glucosyl](n) + ADP-alpha-D-glucose = [(1-&gt;4)-alpha-D-glucosyl](n+1) + ADP + H(+). It functions in the pathway glycan biosynthesis; glycogen biosynthesis. Synthesizes alpha-1,4-glucan chains using ADP-glucose. This Xanthomonas oryzae pv. oryzae (strain PXO99A) protein is Glycogen synthase.